The sequence spans 190 residues: Ribosome maturation factor RimM (190 aa).

Residues Asp114–Tyr190 form the PRC barrel domain.

This sequence belongs to the RimM family. As to quaternary structure, binds ribosomal protein uS19.

The protein resides in the cytoplasm. An accessory protein needed during the final step in the assembly of 30S ribosomal subunit, possibly for assembly of the head region. Essential for efficient processing of 16S rRNA. May be needed both before and after RbfA during the maturation of 16S rRNA. It has affinity for free ribosomal 30S subunits but not for 70S ribosomes. This Acidovorax sp. (strain JS42) protein is Ribosome maturation factor RimM.